A 489-amino-acid polypeptide reads, in one-letter code: Pup--protein ligase (489 aa).

E25 is a Mg(2+) binding site. Residue R69 participates in ATP binding. Mg(2+) is bound at residue Y71. Catalysis depends on D73, which acts as the Proton acceptor. E79 serves as a coordination point for Mg(2+). Residues T82 and W447 each contribute to the ATP site.

The protein belongs to the Pup ligase/Pup deamidase family. Pup-conjugating enzyme subfamily.

It carries out the reaction ATP + [prokaryotic ubiquitin-like protein]-L-glutamate + [protein]-L-lysine = ADP + phosphate + N(6)-([prokaryotic ubiquitin-like protein]-gamma-L-glutamyl)-[protein]-L-lysine.. Its pathway is protein degradation; proteasomal Pup-dependent pathway. The protein operates within protein modification; protein pupylation. Catalyzes the covalent attachment of the prokaryotic ubiquitin-like protein modifier Pup to the proteasomal substrate proteins, thereby targeting them for proteasomal degradation. This tagging system is termed pupylation. The ligation reaction involves the side-chain carboxylate of the C-terminal glutamate of Pup and the side-chain amino group of a substrate lysine. The chain is Pup--protein ligase from Corynebacterium efficiens (strain DSM 44549 / YS-314 / AJ 12310 / JCM 11189 / NBRC 100395).